Reading from the N-terminus, the 572-residue chain is Neuronal acetylcholine receptor subunit alpha-9-I (572 aa).

An N-terminal signal peptide occupies residues 1–19; it reads MKTVVLLTWISCWIDVCTS. The Extracellular segment spans residues 20 to 232; sequence AQGRYAQKLL…YTLHLKRRSL (213 aa). Asn51 carries N-linked (GlcNAc...) asparagine glycosylation. A disulfide bridge links Cys149 with Cys163. An N-linked (GlcNAc...) asparagine glycan is attached at Asn164. Cys213 and Cys214 are joined by a disulfide. The next 3 membrane-spanning stretches (helical) occupy residues 233-253, 263-283, and 297-317; these read FYIF…PLGF, VSLG…VAES, and YIAT…IMNI. Residues 318–550 are Cytoplasmic-facing; sequence HFCGAEAKPV…WKKVAKVMDR (233 aa). The segment at 405–458 is disordered; that stretch reads GHLQNHHSTHQNHLDNCRYANGGHRDDHYSNRSNQNHHSNRSQTSKGEGGEEKR. Positions 435-447 are enriched in low complexity; it reads NRSNQNHHSNRSQ. Residues 551-571 traverse the membrane as a helical segment; the sequence is FFMWIFFIMVFLMSILIIGKA.

Belongs to the ligand-gated ion channel (TC 1.A.9) family. Acetylcholine receptor (TC 1.A.9.1) subfamily. As to expression, expressed in the liver, olfactory mucosa, pituitary gland, hair cells of the saccule and spleen.

It is found in the postsynaptic cell membrane. Its subcellular location is the cell membrane. In Oncorhynchus mykiss (Rainbow trout), this protein is Neuronal acetylcholine receptor subunit alpha-9-I (nachra9).